A 513-amino-acid chain; its full sequence is MAFWQPGQALYLPPTPVTKVLCSEQYINVRDIFYHGETERMLTSGSILSLEVTQKHTTVPKVSPNQYRVFRVALPDPNQFALPDKALHNPSKERLVWAVVGVQVSRGQPLGGEVRGHSYFNTFLDAENVSKKVTAQGTDDRKQAGMDTKQQQVLMLGCTPAIGEYWTKARPCVTDRPDAGSCPPIELKLSFIEDGDMMDIGFGAANFKELNATKSDLPLDIANSICLYPDYLKMTEEAAGNSMFFFARKEQVYVRHIWTPWGTDKELPPEAYYLKPPGEMELKMPSVFFASPSGSLVSTDGQLFNRPYWILRAQGMNNGVCWNNTLFVTVGDNTRGSTLTITVPNNDEPLTEYDTSKFNVYQRHVEEFKLAFILELCSVELTPETVSSLQGSMPSILENWEINLQPPTSSVLEDIYRFIDSPATKCADNVSPSKPEDPYSAHKFWEVNLKEKLSLDLDQFPLGRLVLQFDCRLDRLLPQKDHFTYPEKRYKRHMRITGTVRKVLLYICFSLNS.

It belongs to the papillomaviridae L1 protein family. In terms of assembly, self-assembles into homopentamers. The capsid has an icosahedral symmetry and consists of 72 capsomers, with each capsomer being a pentamer of L1. Interacts with the minor capsid protein L2; this interaction is necessary for viral genome encapsidation. Interacts with protein E2; this interaction enhances E2-dependent replication and transcription activation.

It is found in the virion. The protein localises to the host nucleus. Functionally, forms an icosahedral capsid with a T=7 symmetry and a 50 nm diameter. The capsid is composed of 72 pentamers linked to each other by disulfide bonds and associated with L2 proteins. Binds to heparan sulfate proteoglycans on cell surface of basal layer keratinocytes to provide initial virion attachment. This binding mediates a conformational change in the virus capsid that facilitates efficient infection. The virion enters the host cell via endocytosis. During virus trafficking, L1 protein dissociates from the viral DNA and the genomic DNA is released to the host nucleus. The virion assembly takes place within the cell nucleus. Encapsulates the genomic DNA together with protein L2. In Odocoileus virginianus (White-tailed deer), this protein is Major capsid protein L1.